Here is a 117-residue protein sequence, read N- to C-terminus: Large ribosomal subunit protein uL18 (117 aa).

Belongs to the universal ribosomal protein uL18 family. As to quaternary structure, part of the 50S ribosomal subunit; part of the 5S rRNA/L5/L18/L25 subcomplex. Contacts the 5S and 23S rRNAs.

In terms of biological role, this is one of the proteins that bind and probably mediate the attachment of the 5S RNA into the large ribosomal subunit, where it forms part of the central protuberance. This Tolumonas auensis (strain DSM 9187 / NBRC 110442 / TA 4) protein is Large ribosomal subunit protein uL18.